A 187-amino-acid polypeptide reads, in one-letter code: Putative adenylate kinase (187 aa).

5 residues coordinate ATP: Gly10, Gly12, Lys13, Thr14, and Ile15. An NMP region spans residues 30 to 53; it reads SLSQFVIENKLYTEYDELRQSYII. The LID stretch occupies residues 103-113; the sequence is GRGWADIKVAE. ATP is bound at residue Arg104.

Belongs to the adenylate kinase family. AK6 subfamily. Interacts with uS11. Not a structural component of 40S pre-ribosomes, but transiently interacts with them by binding to uS11.

It carries out the reaction AMP + ATP = 2 ADP. It catalyses the reaction ATP + H2O = ADP + phosphate + H(+). Its function is as follows. Broad-specificity nucleoside monophosphate (NMP) kinase that catalyzes the reversible transfer of the terminal phosphate group between nucleoside triphosphates and monophosphates. Also has ATPase activity. Involved in the late maturation steps of the 30S ribosomal particles, specifically 16S rRNA maturation. While NMP activity is not required for ribosome maturation, ATPase activity is. Associates transiently with small ribosomal subunit protein uS11. ATP hydrolysis breaks the interaction with uS11. May temporarily remove uS11 from the ribosome to enable a conformational change of the ribosomal RNA that is needed for the final maturation step of the small ribosomal subunit. The polypeptide is Putative adenylate kinase (Saccharolobus islandicus (strain L.S.2.15 / Lassen #1) (Sulfolobus islandicus)).